The following is a 139-amino-acid chain: Plastocyanin (139 aa).

The first 34 residues, 1–34 (MKLIAASLRRLSLAVLTVLLVVSSFAVFTPSAAA), serve as a signal peptide directing secretion. A Plastocyanin-like domain is found at 35–135 (ETYTVKLGSD…HRGAGMVGKI (101 aa)). H73, C123, H126, and M131 together coordinate Cu cation.

Belongs to the plastocyanin family. Cu(2+) serves as cofactor.

It localises to the cellular thylakoid membrane. Participates in electron transfer between P700 and the cytochrome b6-f complex in photosystem I. This chain is Plastocyanin (petE), found in Trichormus variabilis (strain ATCC 29413 / PCC 7937) (Anabaena variabilis).